Reading from the N-terminus, the 514-residue chain is Lysine--tRNA ligase (514 aa).

Mg(2+) is bound by residues Glu424 and Glu431.

This sequence belongs to the class-II aminoacyl-tRNA synthetase family. Homodimer. It depends on Mg(2+) as a cofactor.

Its subcellular location is the cytoplasm. It catalyses the reaction tRNA(Lys) + L-lysine + ATP = L-lysyl-tRNA(Lys) + AMP + diphosphate. This is Lysine--tRNA ligase from Cupriavidus necator (strain ATCC 17699 / DSM 428 / KCTC 22496 / NCIMB 10442 / H16 / Stanier 337) (Ralstonia eutropha).